A 322-amino-acid polypeptide reads, in one-letter code: Transaldolase (322 aa).

Residue Lys136 is the Schiff-base intermediate with substrate of the active site.

It belongs to the transaldolase family. Type 1 subfamily. As to quaternary structure, homodimer.

It is found in the cytoplasm. The enzyme catalyses D-sedoheptulose 7-phosphate + D-glyceraldehyde 3-phosphate = D-erythrose 4-phosphate + beta-D-fructose 6-phosphate. Its pathway is carbohydrate degradation; pentose phosphate pathway; D-glyceraldehyde 3-phosphate and beta-D-fructose 6-phosphate from D-ribose 5-phosphate and D-xylulose 5-phosphate (non-oxidative stage): step 2/3. Functionally, transaldolase is important for the balance of metabolites in the pentose-phosphate pathway. In Xanthomonas euvesicatoria pv. vesicatoria (strain 85-10) (Xanthomonas campestris pv. vesicatoria), this protein is Transaldolase.